The chain runs to 130 residues: Small ribosomal subunit protein uS11 (130 aa).

Belongs to the universal ribosomal protein uS11 family. Part of the 30S ribosomal subunit. Interacts with proteins S7 and S18. Binds to IF-3.

Its function is as follows. Located on the platform of the 30S subunit, it bridges several disparate RNA helices of the 16S rRNA. Forms part of the Shine-Dalgarno cleft in the 70S ribosome. This chain is Small ribosomal subunit protein uS11, found in Thermotoga maritima (strain ATCC 43589 / DSM 3109 / JCM 10099 / NBRC 100826 / MSB8).